A 201-amino-acid chain; its full sequence is Ras-related protein Rab-9B (201 aa).

Positions 18, 19, 20, 21, 22, 33, 34, 36, 38, and 39 each coordinate GTP. Serine 21 contacts Mg(2+). The short motif at lysine 31–valine 42 is the Switch 1 element. Serine 34 is subject to Phosphoserine. Residues threonine 39 and aspartate 62 each coordinate Mg(2+). The Switch 2 motif lies at alanine 64–arginine 78. Glycine 65, asparagine 124, lysine 125, alanine 155, and lysine 156 together coordinate GTP. S-geranylgeranyl cysteine attachment occurs at residues cysteine 200 and cysteine 201.

Belongs to the small GTPase superfamily. Rab family. As to quaternary structure, interacts (GTP-bound form) with SGSM1; the GDP-bound form has much lower affinity for SGSM1. The GTP-bound form but not the GDP-bound form interacts with HPS4 and the BLOC-3 complex (heterodimer of HPS1 and HPS4) but does not interact with HPS1 alone. Interacts (GTP-bound form) with NDE1. The cofactor is Mg(2+).

Its subcellular location is the cell membrane. It localises to the cytoplasmic vesicle. The protein resides in the phagosome membrane. It carries out the reaction GTP + H2O = GDP + phosphate + H(+). With respect to regulation, regulated by guanine nucleotide exchange factors (GEFs) which promote the exchange of bound GDP for free GTP. Regulated by GTPase activating proteins (GAPs) which increase the GTP hydrolysis activity. Inhibited by GDP dissociation inhibitors (GDIs). Functionally, the small GTPases Rab are key regulators of intracellular membrane trafficking, from the formation of transport vesicles to their fusion with membranes. Rabs cycle between an inactive GDP-bound form and an active GTP-bound form that is able to recruit to membranes different sets of downstream effectors directly responsible for vesicle formation, movement, tethering and fusion. RAB9B is involved in the transport of proteins between the endosomes and the trans Golgi network. May use NDE1/NDEL1 as an effector to interact with the dynein motor complex in order to control retrograde trafficking of RAB9-associated late endosomes to the TGN. This chain is Ras-related protein Rab-9B, found in Mus musculus (Mouse).